The primary structure comprises 364 residues: Probable dual-specificity RNA methyltransferase RlmN (364 aa).

Glu-106 functions as the Proton acceptor in the catalytic mechanism. Positions 112 to 350 (YPQRNTVCIS…SCTVRDTRGR (239 aa)) constitute a Radical SAM core domain. Cysteines 119 and 356 form a disulfide. Residues Cys-126, Cys-130, and Cys-133 each coordinate [4Fe-4S] cluster. Residues 177 to 178 (GE), Ser-211, 234 to 236 (SLH), and Asn-313 each bind S-adenosyl-L-methionine. Cys-356 (S-methylcysteine intermediate) is an active-site residue.

This sequence belongs to the radical SAM superfamily. RlmN family. Requires [4Fe-4S] cluster as cofactor.

The protein localises to the cytoplasm. The catalysed reaction is adenosine(2503) in 23S rRNA + 2 reduced [2Fe-2S]-[ferredoxin] + 2 S-adenosyl-L-methionine = 2-methyladenosine(2503) in 23S rRNA + 5'-deoxyadenosine + L-methionine + 2 oxidized [2Fe-2S]-[ferredoxin] + S-adenosyl-L-homocysteine. It catalyses the reaction adenosine(37) in tRNA + 2 reduced [2Fe-2S]-[ferredoxin] + 2 S-adenosyl-L-methionine = 2-methyladenosine(37) in tRNA + 5'-deoxyadenosine + L-methionine + 2 oxidized [2Fe-2S]-[ferredoxin] + S-adenosyl-L-homocysteine. Functionally, specifically methylates position 2 of adenine 2503 in 23S rRNA and position 2 of adenine 37 in tRNAs. In Mycobacterium marinum (strain ATCC BAA-535 / M), this protein is Probable dual-specificity RNA methyltransferase RlmN.